Here is a 258-residue protein sequence, read N- to C-terminus: 5'-nucleotidase SurE (258 aa).

The a divalent metal cation site is built by aspartate 14, aspartate 15, serine 45, and asparagine 101.

It belongs to the SurE nucleotidase family. It depends on a divalent metal cation as a cofactor.

The protein resides in the cytoplasm. It catalyses the reaction a ribonucleoside 5'-phosphate + H2O = a ribonucleoside + phosphate. In terms of biological role, nucleotidase that shows phosphatase activity on nucleoside 5'-monophosphates. The polypeptide is 5'-nucleotidase SurE (Chlorobium phaeobacteroides (strain DSM 266 / SMG 266 / 2430)).